The sequence spans 90 residues: PqqA binding protein 2 (90 aa).

It belongs to the PqqD family. As to quaternary structure, monomer. Interacts with PqqE.

The protein operates within cofactor biosynthesis; pyrroloquinoline quinone biosynthesis. In terms of biological role, functions as a PqqA binding protein and presents PqqA to PqqE, in the pyrroloquinoline quinone (PQQ) biosynthetic pathway. The protein is PqqA binding protein 2 (pqqD2) of Pseudomonas putida (strain ATCC 47054 / DSM 6125 / CFBP 8728 / NCIMB 11950 / KT2440).